The primary structure comprises 327 residues: ATP-dependent 6-phosphofructokinase (327 aa).

ATP-binding positions include G12, 73-74, and 103-106; these read RL and GDGS. Residue D104 coordinates Mg(2+). 126–128 contributes to the substrate binding site; that stretch reads TID. Catalysis depends on D128, which acts as the Proton acceptor. Position 155 (R155) interacts with ADP. Residues R163 and 170 to 172 each bind substrate; that span reads MGH. ADP contacts are provided by residues 186-188 and 214-216; these read GAD and KRS. Substrate-binding positions include E223, R245, and 251–254; that span reads HTQR.

It belongs to the phosphofructokinase type A (PFKA) family. ATP-dependent PFK group I subfamily. Prokaryotic clade 'B1' sub-subfamily. As to quaternary structure, homotetramer. Mg(2+) serves as cofactor.

It localises to the cytoplasm. It carries out the reaction beta-D-fructose 6-phosphate + ATP = beta-D-fructose 1,6-bisphosphate + ADP + H(+). Its pathway is carbohydrate degradation; glycolysis; D-glyceraldehyde 3-phosphate and glycerone phosphate from D-glucose: step 3/4. With respect to regulation, allosterically activated by ADP and other diphosphonucleosides, and allosterically inhibited by phosphoenolpyruvate. In terms of biological role, catalyzes the phosphorylation of D-fructose 6-phosphate to fructose 1,6-bisphosphate by ATP, the first committing step of glycolysis. The polypeptide is ATP-dependent 6-phosphofructokinase (Spiroplasma citri).